The sequence spans 89 residues: Cell division topological specificity factor (89 aa).

Belongs to the MinE family.

Prevents the cell division inhibition by proteins MinC and MinD at internal division sites while permitting inhibition at polar sites. This ensures cell division at the proper site by restricting the formation of a division septum at the midpoint of the long axis of the cell. This Laribacter hongkongensis (strain HLHK9) protein is Cell division topological specificity factor.